The chain runs to 257 residues: Snake venom serine protease rhinocerase 4 (257 aa).

The N-terminal stretch at 1 to 17 is a signal peptide; that stretch reads VLIRVLANLLVLQLSYA. A propeptide spanning residues 18–23 is cleaved from the precursor; it reads QKSSEL. In terms of domain architecture, Peptidase S1 spans 24-248; it reads VIGGAECNIN…YTDWIRSIIG (225 aa). 6 cysteine pairs are disulfide-bonded: C30–C162, C49–C65, C97–C255, C141–C209, C173–C188, and C199–C224. An N-linked (GlcNAc...) asparagine glycan is attached at N43. The Charge relay system role is filled by H64. 2 N-linked (GlcNAc...) asparagine glycosylation sites follow: N78 and N100. D109 acts as the Charge relay system in catalysis. S203 serves as the catalytic Charge relay system. A glycan (N-linked (GlcNAc...) asparagine) is linked at N250.

The protein belongs to the peptidase S1 family. Snake venom subfamily. In terms of tissue distribution, expressed by the venom gland.

It is found in the secreted. Its function is as follows. Snake venom serine protease that may act in the hemostasis system of the prey. This is Snake venom serine protease rhinocerase 4 from Bitis rhinoceros (West African gaboon viper).